A 96-amino-acid polypeptide reads, in one-letter code: Cysteine protease immunity 1 (96 aa).

This is Cysteine protease immunity 1 from Escherichia coli O1:K1:H7 (strain ATCC 11775 / DSM 30083 / JCM 1649 / NBRC 102203 / NCTC 9001 / U5/41).